We begin with the raw amino-acid sequence, 242 residues long: Aliphatic sulfonates import ATP-binding protein SsuB 1 (242 aa).

In terms of domain architecture, ABC transporter spans Val-11–Leu-227. Gly-43–Thr-50 is an ATP binding site.

The protein belongs to the ABC transporter superfamily. Aliphatic sulfonates importer (TC 3.A.1.17.2) family. In terms of assembly, the complex is composed of two ATP-binding proteins (SsuB), two transmembrane proteins (SsuC) and a solute-binding protein (SsuA).

Its subcellular location is the cell inner membrane. The catalysed reaction is ATP + H2O + aliphatic sulfonate-[sulfonate-binding protein]Side 1 = ADP + phosphate + aliphatic sulfonateSide 2 + [sulfonate-binding protein]Side 1.. In terms of biological role, part of the ABC transporter complex SsuABC involved in aliphatic sulfonates import. Responsible for energy coupling to the transport system. The sequence is that of Aliphatic sulfonates import ATP-binding protein SsuB 1 from Paracoccus denitrificans (strain Pd 1222).